We begin with the raw amino-acid sequence, 247 residues long: DNA polymerase sliding clamp (247 aa).

Belongs to the PCNA family. As to quaternary structure, homotrimer. The subunits circularize to form a toroid; DNA passes through its center. Replication factor C (RFC) is required to load the toroid on the DNA.

Its function is as follows. Sliding clamp subunit that acts as a moving platform for DNA processing. Responsible for tethering the catalytic subunit of DNA polymerase and other proteins to DNA during high-speed replication. The protein is DNA polymerase sliding clamp of Methanoculleus marisnigri (strain ATCC 35101 / DSM 1498 / JR1).